Consider the following 103-residue polypeptide: uncharacterized protein (103 aa).

This is an uncharacterized protein from Saccharomyces cerevisiae (strain ATCC 204508 / S288c) (Baker's yeast).